Reading from the N-terminus, the 569-residue chain is 4-coumarate--CoA ligase 2 (569 aa).

The ATP site is built by Ser-219, Ser-220, Gly-221, Thr-222, Thr-223, and Lys-227. (E)-4-coumaroyl-AMP-binding residues include Phe-269 and Ser-273. Arg-290 contacts CoA. The segment at 292–361 is SBD1; it reads EMGAMLGAIE…ARLPQAIFGQ (70 aa). (E)-4-coumaroyl-AMP-binding residues include Ala-339, Gln-361, Gly-362, Thr-366, and Met-374. ATP is bound by residues Gln-361, Gly-362, and Thr-366. The segment at 362–429 is SBD2; that stretch reads GYGMTEAGPV…IRGPQIMKGY (68 aa). 2 residues coordinate ATP: Asp-450 and Arg-465. Lys-467 and Lys-471 together coordinate (E)-4-coumaroyl-AMP. The CoA site is built by Lys-473 and Gly-474. Lys-556 contributes to the ATP binding site.

It belongs to the ATP-dependent AMP-binding enzyme family. Mg(2+) is required as a cofactor. As to expression, expressed in roots, stems, leaf blades, leaf sheaths and spikelets.

The enzyme catalyses (E)-ferulate + ATP + CoA = (E)-feruloyl-CoA + AMP + diphosphate. It catalyses the reaction (E)-4-coumarate + ATP + CoA = (E)-4-coumaroyl-CoA + AMP + diphosphate. The catalysed reaction is (E)-caffeate + ATP + CoA = (E)-caffeoyl-CoA + AMP + diphosphate. It carries out the reaction (E)-cinnamate + ATP + CoA = (E)-cinnamoyl-CoA + AMP + diphosphate. The enzyme catalyses (E)-ferulate + ATP + H(+) = (E)-feruloyl-AMP + diphosphate. It catalyses the reaction (E)-feruloyl-AMP + CoA = (E)-feruloyl-CoA + AMP + H(+). The catalysed reaction is (E)-4-coumarate + ATP + H(+) = (E)-4-coumaroyl-AMP + diphosphate. It carries out the reaction (E)-4-coumaroyl-AMP + CoA = (E)-4-coumaroyl-CoA + AMP + H(+). The enzyme catalyses (E)-caffeate + ATP + H(+) = (E)-caffeoyl-AMP + diphosphate. It catalyses the reaction (E)-caffeoyl-AMP + CoA = (E)-caffeoyl-CoA + AMP + H(+). It participates in phytoalexin biosynthesis; 3,4',5-trihydroxystilbene biosynthesis; 3,4',5-trihydroxystilbene from trans-4-coumarate: step 1/2. Functionally, involved in the phenylpropanoid metabolism by mediating the activation of a number of hydroxycinnamates for the biosynthesis of monolignols and other phenolic secondary metabolites. Catalyzes the formation of CoA esters of cinnamate, 4-coumarate, caffeate and ferulate. Is more efficient with substrates in the following order: ferulate &gt; 4-coumarate &gt; caffeate &gt; cinnamate. Cannot convert sinapate to its corresponding CoA ester. Follows a two-step reaction mechanism, wherein the carboxylate substrate first undergoes adenylation by ATP, followed by a thioesterification in the presence of CoA to yield the final CoA thioester. The sequence is that of 4-coumarate--CoA ligase 2 from Oryza sativa subsp. japonica (Rice).